The sequence spans 151 residues: Transcriptional repressor NrdR (151 aa).

Residues 3 to 34 (CPYCGYEETRVLDSRVDSSGMTVRRRRECVKC) fold into a zinc finger. An ATP-cone domain is found at 49–139 (VFVVKKDGKR…VYKDFREIDQ (91 aa)).

The protein belongs to the NrdR family. It depends on Zn(2+) as a cofactor.

Its function is as follows. Negatively regulates transcription of bacterial ribonucleotide reductase nrd genes and operons by binding to NrdR-boxes. The sequence is that of Transcriptional repressor NrdR from Thermosipho melanesiensis (strain DSM 12029 / CIP 104789 / BI429).